Reading from the N-terminus, the 372-residue chain is Cytochrome b (372 aa).

The next 4 membrane-spanning stretches (helical) occupy residues 25–45 (FGSMLLTCLIMQILTGFFLAI), 69–90 (WIMQNLHAIGASMFFICIYIHI), 105–125 (WLSGTTLLITLMATAFFGYVL), and 170–190 (FFALHFILPFAIISLSSIHII). Residues histidine 75 and histidine 89 each coordinate heme b. Heme b-binding residues include histidine 174 and histidine 188. Histidine 193 lines the a ubiquinone pocket. The next 4 helical transmembrane spans lie at 218–238 (YKDMLMITIMVTLLFIILSFL), 280–300 (LGGTMALTMSIMILMTTPFTH), 312–332 (LSQTMFWTLIVTFIMITWTAT), and 339–358 (FITISQTTTVFYFSFFIMTP).

The protein belongs to the cytochrome b family. In terms of assembly, the cytochrome bc1 complex contains 3 respiratory subunits (MT-CYB, CYC1 and UQCRFS1), 2 core proteins (UQCRC1 and UQCRC2) and probably 6 low-molecular weight proteins. It depends on heme b as a cofactor.

The protein localises to the mitochondrion inner membrane. Component of the ubiquinol-cytochrome c reductase complex (complex III or cytochrome b-c1 complex) that is part of the mitochondrial respiratory chain. The b-c1 complex mediates electron transfer from ubiquinol to cytochrome c. Contributes to the generation of a proton gradient across the mitochondrial membrane that is then used for ATP synthesis. This chain is Cytochrome b (MT-CYB), found in Aspidelaps scutatus (Shield-nose snake).